We begin with the raw amino-acid sequence, 374 residues long: Phosphatidylglycerol--prolipoprotein diacylglyceryl transferase (374 aa).

Helical transmembrane passes span 33 to 53 (ICFITGFILGYFIIVPIIALF), 155 to 175 (LCWFIVFGTLIGARLGAVFFY), 195 to 215 (LASHGGALGVMLALFFYTSYI), and 222 to 242 (LSFLRVLDFVAIPSALTAVFI). Arg243 contacts a 1,2-diacyl-sn-glycero-3-phospho-(1'-sn-glycerol). The next 3 helical transmembrane spans lie at 279 to 299 (PVQLYEAFAYLMTFFLLFTLW), 306 to 326 (LAAGTYAGFLFIFNFSSRFLL), and 341 to 361 (ILQMGQLLSIPFILFGICLVW).

The protein belongs to the Lgt family.

The protein localises to the cell inner membrane. It carries out the reaction L-cysteinyl-[prolipoprotein] + a 1,2-diacyl-sn-glycero-3-phospho-(1'-sn-glycerol) = an S-1,2-diacyl-sn-glyceryl-L-cysteinyl-[prolipoprotein] + sn-glycerol 1-phosphate + H(+). It functions in the pathway protein modification; lipoprotein biosynthesis (diacylglyceryl transfer). Catalyzes the transfer of the diacylglyceryl group from phosphatidylglycerol to the sulfhydryl group of the N-terminal cysteine of a prolipoprotein, the first step in the formation of mature lipoproteins. This is Phosphatidylglycerol--prolipoprotein diacylglyceryl transferase from Protochlamydia amoebophila (strain UWE25).